We begin with the raw amino-acid sequence, 278 residues long: Large ribosomal subunit protein uL2 (278 aa).

Disordered regions lie at residues 32 to 54 (SLCR…TRHI) and 221 to 278 (RGMT…RNAK). Positions 232–245 (NGGGEGKSKSGGGR) are enriched in gly residues.

The protein belongs to the universal ribosomal protein uL2 family. Part of the 50S ribosomal subunit. Forms a bridge to the 30S subunit in the 70S ribosome.

Functionally, one of the primary rRNA binding proteins. Required for association of the 30S and 50S subunits to form the 70S ribosome, for tRNA binding and peptide bond formation. It has been suggested to have peptidyltransferase activity; this is somewhat controversial. Makes several contacts with the 16S rRNA in the 70S ribosome. This is Large ribosomal subunit protein uL2 from Akkermansia muciniphila (strain ATCC BAA-835 / DSM 22959 / JCM 33894 / BCRC 81048 / CCUG 64013 / CIP 107961 / Muc).